The following is a 543-amino-acid chain: Hydroxylamine reductase (543 aa).

[4Fe-4S] cluster contacts are provided by Cys-5, Cys-8, Cys-17, and Cys-23. Positions 250, 274, 318, 410, 438, 463, 498, and 500 each coordinate hybrid [4Fe-2O-2S] cluster. At Cys-410 the chain carries Cysteine persulfide.

Belongs to the HCP family. [4Fe-4S] cluster is required as a cofactor. The cofactor is hybrid [4Fe-2O-2S] cluster.

It is found in the cytoplasm. It carries out the reaction A + NH4(+) + H2O = hydroxylamine + AH2 + H(+). Functionally, catalyzes the reduction of hydroxylamine to form NH(3) and H(2)O. This Petrotoga mobilis (strain DSM 10674 / SJ95) protein is Hydroxylamine reductase.